Consider the following 249-residue polypeptide: Probable hydroxyacylglutathione hydrolase ECU02_0580 (249 aa).

Residues His-75, His-77, Asp-79, His-80, His-126, Asp-144, and His-183 each coordinate Zn(2+). Substrate contacts are provided by residues 183–185 (HDY) and 240–243 (RERK).

Belongs to the metallo-beta-lactamase superfamily. Glyoxalase II family. Zn(2+) serves as cofactor.

It is found in the cytoplasm. Its subcellular location is the nucleus. The catalysed reaction is an S-(2-hydroxyacyl)glutathione + H2O = a 2-hydroxy carboxylate + glutathione + H(+). Its pathway is secondary metabolite metabolism; methylglyoxal degradation; (R)-lactate from methylglyoxal: step 2/2. Functionally, thiolesterase that catalyzes the hydrolysis of S-D-lactoyl-glutathione to form glutathione and D-lactic acid. The sequence is that of Probable hydroxyacylglutathione hydrolase ECU02_0580 from Encephalitozoon cuniculi (strain GB-M1) (Microsporidian parasite).